A 432-amino-acid polypeptide reads, in one-letter code: Glutamyl-tRNA reductase (432 aa).

Substrate-binding positions include 49 to 52 (TCNR), serine 109, 114 to 116 (EGQ), and glutamine 120. Cysteine 50 serves as the catalytic Nucleophile. NADP(+) is bound at residue 198–203 (GAGRMS).

This sequence belongs to the glutamyl-tRNA reductase family. Homodimer.

It catalyses the reaction (S)-4-amino-5-oxopentanoate + tRNA(Glu) + NADP(+) = L-glutamyl-tRNA(Glu) + NADPH + H(+). The protein operates within porphyrin-containing compound metabolism; protoporphyrin-IX biosynthesis; 5-aminolevulinate from L-glutamyl-tRNA(Glu): step 1/2. It functions in the pathway porphyrin-containing compound metabolism; chlorophyll biosynthesis. Its function is as follows. Catalyzes the NADPH-dependent reduction of glutamyl-tRNA(Glu) to glutamate 1-semialdehyde (GSA). The sequence is that of Glutamyl-tRNA reductase from Synechococcus sp. (strain CC9605).